A 277-amino-acid chain; its full sequence is Diaminopimelate epimerase (277 aa).

2 residues coordinate substrate: Asn-11 and Asn-62. Residue Cys-71 is the Proton donor of the active site. Substrate is bound by residues Gly-72–Asn-73, Asn-160, Asn-193, and Glu-211–Arg-212. The active-site Proton acceptor is the Cys-220. Gly-221 to Thr-222 is a substrate binding site.

This sequence belongs to the diaminopimelate epimerase family. In terms of assembly, homodimer.

It is found in the cytoplasm. It carries out the reaction (2S,6S)-2,6-diaminopimelate = meso-2,6-diaminopimelate. Its pathway is amino-acid biosynthesis; L-lysine biosynthesis via DAP pathway; DL-2,6-diaminopimelate from LL-2,6-diaminopimelate: step 1/1. Its function is as follows. Catalyzes the stereoinversion of LL-2,6-diaminopimelate (L,L-DAP) to meso-diaminopimelate (meso-DAP), a precursor of L-lysine. The polypeptide is Diaminopimelate epimerase (Methanococcus maripaludis (strain C5 / ATCC BAA-1333)).